Reading from the N-terminus, the 225-residue chain is Cytidylate kinase (225 aa).

11–19 is a binding site for ATP; it reads GPAAAGKST.

The protein belongs to the cytidylate kinase family. Type 1 subfamily.

It is found in the cytoplasm. It catalyses the reaction CMP + ATP = CDP + ADP. It carries out the reaction dCMP + ATP = dCDP + ADP. The chain is Cytidylate kinase from Bacillus anthracis (strain A0248).